The chain runs to 330 residues: MKKSFIDQQKEISFVKNTFTQYLIDKLDVVEVQGPILSKVGDGMQDNLNGIENPVTVNVLQIPDATYEVVHSLAKWKRHTLARFGFNEGEGLVVNMKALRPDEDSLDATHSVYVDQWDWEKVIPDGHRNIAYLKETVETIYKVIRLTELAVEARYDIEAVLPKKITFIHSEELVEKYPDLTPKERENAITKEYGAVFLIGIGGVLPDGKPHDGRAPDYDDWTTESEKGYHGLNGDILVWNEQLGHAFELSSMGIRVDEDALKRQVEITGDQDRLKLDWHQALLQGQFPLTIGGGIGQSRMAMFLLRKKHIGEVQTSVWPDAVRETYENIL.

The protein belongs to the class-II aminoacyl-tRNA synthetase family. AsnA subfamily.

It localises to the cytoplasm. It catalyses the reaction L-aspartate + NH4(+) + ATP = L-asparagine + AMP + diphosphate + H(+). It functions in the pathway amino-acid biosynthesis; L-asparagine biosynthesis; L-asparagine from L-aspartate (ammonia route): step 1/1. The chain is Aspartate--ammonia ligase from Streptococcus thermophilus (strain ATCC BAA-250 / LMG 18311).